The primary structure comprises 760 residues: Catecholate siderophore receptor Fiu (760 aa).

The N-terminal stretch at 1-31 is a signal peptide; sequence MENNRNFPARQFHSLTFFAGLCIGITPVAQA. A TBDR plug domain is found at 67–175; the sequence is PVADTTRTMT…PTGSINMISK (109 aa). The 581-residue stretch at 180–760 folds into the TBDR beta-barrel domain; it reads DSGIDASASI…TFLLTANMHF (581 aa). The TonB C-terminal box signature appears at 743 to 760; the sequence is RYHPGEPRTFLLTANMHF.

This sequence belongs to the TonB-dependent receptor family.

The protein localises to the cell outer membrane. Involved in the active transport across the outer membrane of iron complexed with catecholate siderophores such as dihydroxybenzoylserine and dihydroxybenzoate. It derives its energy for transport by interacting with the trans-periplasmic membrane protein TonB. Can also transport catechol-substituted cephalosporins. Receptor for microcins M, H47 and E492. The protein is Catecholate siderophore receptor Fiu (fiu) of Escherichia coli O157:H7.